Consider the following 1213-residue polypeptide: DNA-directed RNA polymerase subunit beta (1213 aa).

Positions 1153–1213 (RDMDEDSSEH…ADESDGKVSK (61 aa)) are disordered. Positions 1171-1198 (MAEEQEKKKLAEETGKSENKEDSNETAD) are enriched in basic and acidic residues.

Belongs to the RNA polymerase beta chain family. In terms of assembly, the RNAP catalytic core consists of 2 alpha, 1 beta, 1 beta' and 1 omega subunit. When a sigma factor is associated with the core the holoenzyme is formed, which can initiate transcription.

It carries out the reaction RNA(n) + a ribonucleoside 5'-triphosphate = RNA(n+1) + diphosphate. DNA-dependent RNA polymerase catalyzes the transcription of DNA into RNA using the four ribonucleoside triphosphates as substrates. The sequence is that of DNA-directed RNA polymerase subunit beta from Lactobacillus acidophilus (strain ATCC 700396 / NCK56 / N2 / NCFM).